The chain runs to 375 residues: Ketohexokinase (375 aa).

Residue Asp319 participates in beta-D-fructose binding.

This sequence belongs to the carbohydrate kinase PfkB family. As to quaternary structure, homodimer.

The catalysed reaction is beta-D-fructose + ATP = beta-D-fructose 1-phosphate + ADP + H(+). Its pathway is carbohydrate metabolism; fructose metabolism. Its activity is regulated as follows. Activated in the presence of 0.5 M KCl. 85% activity at 3.5 M KCl. 60% activity without KCl. Functionally, catalyzes the ATP-dependent phosphorylation of the ketose sugar fructose to fructose-1-phosphate. Does not produce fructose-6-phosphate. The sugars D-glucose, D-galactose, L-rhamnose, D-xylose, L-arabinose and D-ribose are not substrates of this enzyme. In Haloferax volcanii (strain ATCC 29605 / DSM 3757 / JCM 8879 / NBRC 14742 / NCIMB 2012 / VKM B-1768 / DS2) (Halobacterium volcanii), this protein is Ketohexokinase.